A 181-amino-acid chain; its full sequence is Inner membrane-spanning protein YciB (181 aa).

The next 5 membrane-spanning stretches (helical) occupy residues L10–I30, M50–D70, S72–S92, V118–F138, and F148–L168.

Belongs to the YciB family.

The protein resides in the cell inner membrane. In terms of biological role, plays a role in cell envelope biogenesis, maintenance of cell envelope integrity and membrane homeostasis. In Shewanella halifaxensis (strain HAW-EB4), this protein is Inner membrane-spanning protein YciB.